Reading from the N-terminus, the 329-residue chain is UDP-sugar transporter sqv-7 (329 aa).

Transmembrane regions (helical) follow at residues 15–34 (SAVF…KILL), 41–63 (SFLF…AKMF), 86–108 (YFFN…FTVL), 129–151 (SKAV…IYDL), 155–174 (ALGY…LGVY), 187–209 (YGLM…QYTG), 224–246 (TSSV…YSLV), 253–275 (SALT…GMFS), and 280–302 (VFQW…YTYV).

This sequence belongs to the TPT transporter family. SLC35D subfamily.

The protein localises to the golgi apparatus membrane. In terms of biological role, acts as a transporter of UDP-glucuronic acid (UDP-GlcA), UDP-N-acetylgalactosamine (UDP-GalNAc) and UDP-galactose (UDP-Gal) from the cytoplasm into the Golgi lumen. Involved in the biosynthesis of glycoconjugates that play a pivotal role in development. Involved in the synthesis of chondroitin sulfate and heparan sulfate proteoglycans. Required for embryonic development. Involved in vulva epithelium invagination and embryonic development. Involved in the directed migration of hermaphrodite-specific neurons. The sequence is that of UDP-sugar transporter sqv-7 (sqv-7) from Caenorhabditis elegans.